Reading from the N-terminus, the 446-residue chain is UDP-N-acetylmuramoylalanine--D-glutamate ligase (446 aa).

116–122 (GSNGKTT) contacts ATP.

The protein belongs to the MurCDEF family.

It localises to the cytoplasm. It carries out the reaction UDP-N-acetyl-alpha-D-muramoyl-L-alanine + D-glutamate + ATP = UDP-N-acetyl-alpha-D-muramoyl-L-alanyl-D-glutamate + ADP + phosphate + H(+). It functions in the pathway cell wall biogenesis; peptidoglycan biosynthesis. Its function is as follows. Cell wall formation. Catalyzes the addition of glutamate to the nucleotide precursor UDP-N-acetylmuramoyl-L-alanine (UMA). The chain is UDP-N-acetylmuramoylalanine--D-glutamate ligase from Marinobacter nauticus (strain ATCC 700491 / DSM 11845 / VT8) (Marinobacter aquaeolei).